The chain runs to 310 residues: Putative sugar kinase PH1459 (310 aa).

Residues Lys-194, Thr-219, and Gly-224 each contribute to the ATP site.

The protein belongs to the carbohydrate kinase PfkB family.

In Pyrococcus horikoshii (strain ATCC 700860 / DSM 12428 / JCM 9974 / NBRC 100139 / OT-3), this protein is Putative sugar kinase PH1459.